A 314-amino-acid chain; its full sequence is MEEKNQTIVMEFFFLGLTDHLYQKIALFITILFVYLVTLGGNLGMITLIWADPRLHTPMYFFLSHLSFVDMCSSSSIAPKMLCDIFAEEKRISFMGCAAQMWFFGFFVGTECFLLASMAYDRYTAICKPLLYTLLMSQRVCVHLVVGPYVFAIINITTHTTLAFCLPFCGSNTINHFFCDVSPLLSLACADSWVNKVVLFVLSGAIGVFSGLIIIVSYVSILMTIFKIQTADGKQKAFSTCSSHLSAVSILYGTLFFIYVRPSASFSLNINKMISLFYTVVIPMLNPLIYSLRNKEVKGAFRRKVQKKHFPAGR.

Residues 1–25 (MEEKNQTIVMEFFFLGLTDHLYQKI) lie on the Extracellular side of the membrane. A glycan (N-linked (GlcNAc...) asparagine) is linked at Asn-5. Residues 26–46 (ALFITILFVYLVTLGGNLGMI) form a helical membrane-spanning segment. Topologically, residues 47-54 (TLIWADPR) are cytoplasmic. The chain crosses the membrane as a helical span at residues 55 to 75 (LHTPMYFFLSHLSFVDMCSSS). At 76 to 99 (SIAPKMLCDIFAEEKRISFMGCAA) the chain is on the extracellular side. Cys-97 and Cys-189 are joined by a disulfide. The helical transmembrane segment at 100 to 120 (QMWFFGFFVGTECFLLASMAY) threads the bilayer. Residues 121–133 (DRYTAICKPLLYT) are Cytoplasmic-facing. A helical membrane pass occupies residues 134 to 154 (LLMSQRVCVHLVVGPYVFAII). Residues 155–196 (NITTHTTLAFCLPFCGSNTINHFFCDVSPLLSLACADSWVNK) are Extracellular-facing. The chain crosses the membrane as a helical span at residues 197-217 (VVLFVLSGAIGVFSGLIIIVS). At 218–237 (YVSILMTIFKIQTADGKQKA) the chain is on the cytoplasmic side. Residues 238-258 (FSTCSSHLSAVSILYGTLFFI) form a helical membrane-spanning segment. The Extracellular segment spans residues 259–271 (YVRPSASFSLNIN). A helical membrane pass occupies residues 272–292 (KMISLFYTVVIPMLNPLIYSL). Residues 293 to 312 (RNKEVKGAFRRKVQKKHFPA) lie on the Cytoplasmic side of the membrane.

This sequence belongs to the G-protein coupled receptor 1 family.

Its subcellular location is the cell membrane. Its function is as follows. Potential odorant receptor. This chain is Olfactory receptor 5G29, found in Mus musculus (Mouse).